The primary structure comprises 250 residues: MQLSFSRPRPWTLLLMVVSNLLLWENVSSGNLNSNETDGDLLLHRGLFDTATRLSQDIRDLDIEFLRMYAVNEVSEKLYNKHMLEFIEDMDFVVKALTCCHNYSIKTPENLDEAQQIPFNDFPWLILSRMWGWNETSKNLLTILRSIPGMHDDVISLAQAIERKLAELFEYTQSILTLIFGPTENVDRSIFSGLEDLKASDEELRFFALCKFSYCLRVDLQTIELYFKLLQCAVNVNSNVCLSINSEDSS.

An N-terminal signal peptide occupies residues 1–29; sequence MQLSFSRPRPWTLLLMVVSNLLLWENVSS. 4 N-linked (GlcNAc...) asparagine glycosylation sites follow: Asn-26, Asn-35, Asn-102, and Asn-134. Disulfide bonds link Cys-100–Cys-215 and Cys-232–Cys-241.

This sequence belongs to the somatotropin/prolactin family. In terms of tissue distribution, expression restricted to placental tissues. Trophoblast giant cells are found to be the major source.

The protein localises to the secreted. In Rattus norvegicus (Rat), this protein is Prolactin-7A2 (Prl7a2).